The primary structure comprises 330 residues: Stimulated by retinoic acid gene 8 protein homolog (330 aa).

Positions 50–55 match the Nuclear localization signal (NLS) motif; the sequence is RVARRR. The stretch at 88-112 forms a coiled coil; that stretch reads QVLNKAKSHIPELEQTLDNLLKLKA.

In terms of assembly, interacts with XPO1. Interacts with MEIOSIN. Post-translationally, phosphorylated. In terms of tissue distribution, expressed specifically in testis and fetal ovaries.

It localises to the cytoplasm. The protein localises to the nucleus. In terms of biological role, meiosis-inducer required for the transition into meiosis for both female and male germ cells. In female germ cells, acts downstream of ZGLP1 as a key effector of the meiotic program: required for premeiotic DNA replication and subsequent events in meiotic prophase. During spermatogenesis, next to its role in meiotic initiation, promotes (but is not required for) spermatogonial differentiation. In complex with MEIOSIN, directly activates the transcription of a subset of critical meiotic genes playing a central role in cell-cycle switching from mitosis to meiosis. This is Stimulated by retinoic acid gene 8 protein homolog from Homo sapiens (Human).